A 270-amino-acid chain; its full sequence is Sulfur carrier protein FdhD (270 aa).

Cys-116 functions as the Cysteine persulfide intermediate in the catalytic mechanism. Residue 253 to 258 (FAREGK) participates in Mo-bis(molybdopterin guanine dinucleotide) binding.

It belongs to the FdhD family.

Its subcellular location is the cytoplasm. Its function is as follows. Required for formate dehydrogenase (FDH) activity. Acts as a sulfur carrier protein that transfers sulfur from IscS to the molybdenum cofactor prior to its insertion into FDH. The protein is Sulfur carrier protein FdhD of Haemophilus influenzae (strain 86-028NP).